A 401-amino-acid chain; its full sequence is Putative phosphatidylinositol 4-phosphate 5-kinase 11 (401 aa).

A PIPK domain is found at 1–390; sequence MELRATVENR…RFQDFVSNIF (390 aa). The span at 242-260 shows a compositional bias: polar residues; that stretch reads SFKSNSTKSMKTASSSPDR. Positions 242–268 are disordered; the sequence is SFKSNSTKSMKTASSSPDRSSVAMYSC. The interval 350–371 is activation loop; that stretch reads YGMKKRIEHCYKSIQYNSNSIS.

The catalysed reaction is a 1,2-diacyl-sn-glycero-3-phospho-(1D-myo-inositol 4-phosphate) + ATP = a 1,2-diacyl-sn-glycero-3-phospho-(1D-myo-inositol-4,5-bisphosphate) + ADP + H(+). The chain is Putative phosphatidylinositol 4-phosphate 5-kinase 11 (PIP5K11) from Arabidopsis thaliana (Mouse-ear cress).